The chain runs to 4351 residues: Protocadherin Fat 2 (4351 aa).

Positions 1–18 (MTLVLLGVAMVLLHRAAC) are cleaved as a signal peptide. Topologically, residues 19–4050 (EKPLEETITP…IKRGDWGQQE (4032 aa)) are extracellular. 2 Cadherin domains span residues 34 to 148 (THSL…KPLF) and 149 to 256 (SPPS…PPVI). Asn-39, Asn-210, Asn-280, and Asn-330 each carry an N-linked (GlcNAc...) asparagine glycan. 31 consecutive Cadherin domains span residues 363 to 458 (EKAV…APVF), 459 to 564 (NRSS…QPMF), 565 to 669 (EEVN…VPVQ), 716 to 820 (DHFP…PPRF), 821 to 925 (PPGG…PPQC), 926 to 1032 (ITEH…SPHF), 1033 to 1142 (SSFV…RPVF), 1138 to 1242 (SRPV…SPMF), 1243 to 1346 (SHKL…SSIP), 1350 to 1448 (DESH…RPQF), 1449 to 1555 (LQDH…SPHF), 1556 to 1660 (TQPR…APIF), 1661 to 1758 (SKDE…APAF), 1759 to 1872 (LKST…PPRF), 1873 to 1968 (SEQI…SLQF), 1969 to 2070 (DQDI…IPEF), 2071 to 2171 (QHLP…NPLF), 2172 to 2272 (QSPY…PPTF), 2273 to 2379 (SQLV…PPEF), 2380 to 2481 (REPQ…SPEF), 2482 to 2585 (QQNV…APQF), 2586 to 2692 (KASG…LPKF), 2693 to 2799 (SEPL…RPVF), 2800 to 2908 (EADP…PPRF), 2909 to 3013 (ASED…SPQC), 3014 to 3115 (SQLL…APRF), 3116 to 3220 (FPSH…LPIF), 3221 to 3323 (LNSE…HPRF), 3324 to 3428 (THDL…PPRF), 3429 to 3533 (FQLN…PPST), and 3534 to 3631 (LPLE…APQQ). 4 N-linked (GlcNAc...) asparagine glycosylation sites follow: Asn-459, Asn-568, Asn-627, and Asn-789. Asn-996 is a glycosylation site (N-linked (GlcNAc...) asparagine). Asn-1175, Asn-1276, and Asn-1417 each carry an N-linked (GlcNAc...) asparagine glycan. N-linked (GlcNAc...) asparagine glycans are attached at residues Asn-1899, Asn-1998, Asn-2007, Asn-2102, Asn-2165, Asn-2183, Asn-2325, Asn-2368, Asn-2387, Asn-2430, Asn-2470, Asn-2547, and Asn-2597. 3 N-linked (GlcNAc...) asparagine glycosylation sites follow: Asn-3127, Asn-3278, and Asn-3312. Asn-3432, Asn-3603, Asn-3770, Asn-3774, Asn-3815, Asn-3842, Asn-3875, and Asn-3906 each carry an N-linked (GlcNAc...) asparagine glycan. Positions 3775–3946 (GTTWRFSGQS…YLETWALSQC (172 aa)) constitute a Laminin G-like domain. 4 disulfides stabilise this stretch: Cys-3914-Cys-3946, Cys-3953-Cys-3964, Cys-3958-Cys-3974, and Cys-3976-Cys-3985. EGF-like domains lie at 3949-3986 (PGTT…RNCE) and 3988-4024 (GREN…DRCE). Asn-3991 carries an N-linked (GlcNAc...) asparagine glycan. Intrachain disulfides connect Cys-3992-Cys-4003, Cys-3997-Cys-4012, and Cys-4014-Cys-4023. The helical transmembrane segment at 4051–4071 (FLVIIVALPLLIIATVGLLLY) threads the bilayer. The Cytoplasmic portion of the chain corresponds to 4072–4351 (CRRCKSHKPV…DYGSCEEVMF (280 aa)). The tract at residues 4313–4340 (DCEVNGGPAPGRSQPRAPPNYEGSDMVE) is disordered.

In terms of assembly, homodimer.

It localises to the cell membrane. The protein resides in the cell junction. It is found in the golgi apparatus. The protein localises to the trans-Golgi network. Functionally, involved in the regulation of cell migration. May be involved in mediating the organization of the parallel fibers of granule cells during cerebellar development. The polypeptide is Protocadherin Fat 2 (Fat2) (Mus musculus (Mouse)).